The chain runs to 813 residues: Histone acetyltransferase KAT2B (813 aa).

Disordered stretches follow at residues 1 to 55 (MAEA…GGSA) and 380 to 423 (NSTS…EAKR). Residues 32–46 (ASCGPATAVAAAGTA) are compositionally biased toward low complexity. Polar residues predominate over residues 380-391 (NSTSHEQINGGR). A compositionally biased stretch (basic and acidic residues) spans 406 to 423 (PGEKRKMNNSHAPEEAKR). The N-acetyltransferase domain maps to 484-632 (LNQKPNKKIL…GATLMGCELN (149 aa)). The active-site Proton donor/acceptor is the Glu-551. Acetyl-CoA-binding positions include 555 to 557 (CAV), 562 to 568 (QVKGYGT), and 593 to 596 (YAIG). The Bromo domain occupies 704–808 (KDPEQLYSTL…KFFFSKIKEA (105 aa)).

Belongs to the acetyltransferase family. GCN5 subfamily. Interacts with BCAS3. Interacts with SIRT1. Interacts with EP300, CREBBP and DDX17. Component of a large chromatin remodeling complex, at least composed of MYSM1, KAT2B/PCAF, RBM10 and KIF11/TRIP5. Interacts with KLF1; the interaction does not acetylate KLF1 and there is no enhancement of its transactivational activity. Interacts with NFE4. Interacts with MECOM. Interacts with NR2C2 (hypophosphorylated and unsumoylated form); the interaction promotes the transactivation activity of NR2C2. Interacts with NFE4. Interacts with MECOM. Interacts with E2F1; the interaction acetylates E2F1 augmenting its DNA-binding and transcriptional activity. Interacts with NPAS2, BMAL1 and CLOCK. Interacts (unsumoylated form) with NR2C1; the interaction promotes transactivation activity. Interacts with CEBPB. Interacts with NR4A3. Interacts with TBX5. Interacts with PLK4. Interacts with RB1; this interaction leads to RB1 acetylation. Interacts with VRK1.

The protein localises to the nucleus. The protein resides in the cytoplasm. It is found in the cytoskeleton. It localises to the microtubule organizing center. Its subcellular location is the centrosome. It carries out the reaction L-lysyl-[histone] + acetyl-CoA = N(6)-acetyl-L-lysyl-[histone] + CoA + H(+). The catalysed reaction is L-lysyl-[protein] + acetyl-CoA = N(6)-acetyl-L-lysyl-[protein] + CoA + H(+). It catalyses the reaction spermidine + acetyl-CoA = N(8)-acetylspermidine + CoA + H(+). Functions as a histone acetyltransferase (HAT) to promote transcriptional activation. Has significant histone acetyltransferase activity with core histones (H3 and H4), and also with nucleosome core particles. Has a a strong preference for acetylation of H3 at 'Lys-9' (H3K9ac). Also acetylates non-histone proteins, such as ACLY, MAPRE1/EB1, PLK4, RRP9/U3-55K and TBX5. Acts as a circadian transcriptional coactivator which enhances the activity of the circadian transcriptional activators: NPAS2-BMAL1 and CLOCK-BMAL1 heterodimers. Involved in heart and limb development by mediating acetylation of TBX5, acetylation regulating nucleocytoplasmic shuttling of TBX5. Acts as a negative regulator of centrosome amplification by mediating acetylation of PLK4. Acetylates RRP9/U3-55K, a core subunit of the U3 snoRNP complex, impairing pre-rRNA processing. Acetylates MAPRE1/EB1, promoting dynamic kinetochore-microtubule interactions in early mitosis. Also acetylates spermidine. The sequence is that of Histone acetyltransferase KAT2B from Mus musculus (Mouse).